Here is a 693-residue protein sequence, read N- to C-terminus: Putative adenosylcobalamin-dependent ribonucleoside-triphosphate reductase (693 aa).

The cysteines at positions 90 and 386 are disulfide-linked. Active-site residues include Cys375 and Glu377.

The protein belongs to the class II ribonucleoside-triphosphate reductase family. It depends on adenosylcob(III)alamin as a cofactor.

The catalysed reaction is a 2'-deoxyribonucleoside 5'-triphosphate + [thioredoxin]-disulfide + H2O = a ribonucleoside 5'-triphosphate + [thioredoxin]-dithiol. This is Putative adenosylcobalamin-dependent ribonucleoside-triphosphate reductase (50) from Mycobacterium phage D29 (Mycobacteriophage D29).